The sequence spans 431 residues: Glutamate-1-semialdehyde 2,1-aminomutase (431 aa).

N6-(pyridoxal phosphate)lysine is present on K269.

The protein belongs to the class-III pyridoxal-phosphate-dependent aminotransferase family. HemL subfamily. Homodimer. It depends on pyridoxal 5'-phosphate as a cofactor.

It is found in the cytoplasm. It carries out the reaction (S)-4-amino-5-oxopentanoate = 5-aminolevulinate. Its pathway is porphyrin-containing compound metabolism; protoporphyrin-IX biosynthesis; 5-aminolevulinate from L-glutamyl-tRNA(Glu): step 2/2. It participates in porphyrin-containing compound metabolism; chlorophyll biosynthesis. This Pelodictyon phaeoclathratiforme (strain DSM 5477 / BU-1) protein is Glutamate-1-semialdehyde 2,1-aminomutase.